The sequence spans 131 residues: Small ribosomal subunit protein uS19 (131 aa).

It belongs to the universal ribosomal protein uS19 family.

Protein S19 forms a complex with S13 that binds strongly to the 16S ribosomal RNA. The polypeptide is Small ribosomal subunit protein uS19 (Cenarchaeum symbiosum (strain A)).